The chain runs to 396 residues: Metacaspase-1 (396 aa).

Over residues methionine 1 to glutamine 20 the composition is skewed to gly residues. The tract at residues methionine 1–glycine 86 is disordered. The span at histidine 47 to glutamine 62 shows a compositional bias: low complexity. A compositionally biased stretch (polar residues) spans glutamine 72–glutamine 81. Catalysis depends on residues histidine 186 and cysteine 242.

This sequence belongs to the peptidase C14B family.

Involved in cell death (apoptosis). This is Metacaspase-1 (MCA1) from Pyricularia oryzae (strain 70-15 / ATCC MYA-4617 / FGSC 8958) (Rice blast fungus).